A 272-amino-acid polypeptide reads, in one-letter code: Glutamate racemase (272 aa).

Substrate contacts are provided by residues 9 to 10 (DS) and 41 to 42 (YG). Catalysis depends on C73, which acts as the Proton donor/acceptor. 74–75 (NT) provides a ligand contact to substrate. C183 functions as the Proton donor/acceptor in the catalytic mechanism. 184-185 (TH) provides a ligand contact to substrate.

This sequence belongs to the aspartate/glutamate racemases family.

It carries out the reaction L-glutamate = D-glutamate. The protein operates within cell wall biogenesis; peptidoglycan biosynthesis. In terms of biological role, provides the (R)-glutamate required for cell wall biosynthesis. This is Glutamate racemase from Shewanella sp. (strain MR-7).